The sequence spans 944 residues: Ras guanine nucleotide exchange factor O (944 aa).

Residues 16–54 (CGICQNLFKDPNTLIPCGHAFCLDCLTTNASIKNCIQCK) form an RING-type zinc finger. The disordered stretch occupies residues 80-102 (NNSNNNSNGENTNNNNNIINNER). The B box-type zinc-finger motif lies at 152–192 (NNIRYCMEHYEHYYAFCNDCQAPVCPSCLLTTHNRHGMIPL). Residues C157, H160, C179, and H184 each coordinate Zn(2+). 2 coiled-coil regions span residues 200–234 (KMKE…LLDS) and 271–303 (ASHM…KFKD). One can recognise an N-terminal Ras-GEF domain in the interval 402–528 (EEFEVKYGSL…LLLNSNENSP (127 aa)). 3 disordered regions span residues 530-562 (ITSS…LQPT), 587-623 (TNNG…SSPS), and 644-670 (ESPL…FGAS). The span at 590 to 604 (GTCKIQNSPPKNYQQ) shows a compositional bias: polar residues. Low complexity-rich tracts occupy residues 605–623 (SNYS…SSPS) and 648–670 (NSPR…FGAS). The 218-residue stretch at 727-944 (DEFEIAKQLT…EYLNVHIDEL (218 aa)) folds into the Ras-GEF domain.

Functionally, promotes the exchange of Ras-bound GDP by GTP. The protein is Ras guanine nucleotide exchange factor O (gefO) of Dictyostelium discoideum (Social amoeba).